The sequence spans 211 residues: C-type lectin domain family 2 member L (211 aa).

The disordered stretch occupies residues 1–53 (MEPAREPPARARPPPPAARPAPAAPRPRSPAEAEARGPEGLLRRSGSGYEGST). Over residues 10–28 (RARPPPPAARPAPAAPRPR) the composition is skewed to pro residues. At serine 29 the chain carries Phosphoserine. Residues 66-86 (LLLGAIAVLLFAILVVMSILA) form a helical membrane-spanning segment. The region spanning 104–206 (YGRKCYYFSE…CLTTRPWVCS (103 aa)) is the C-type lectin domain. Cystine bridges form between cysteine 125–cysteine 205 and cysteine 184–cysteine 197.

It is found in the membrane. This Mus musculus (Mouse) protein is C-type lectin domain family 2 member L (Clec2l).